The following is a 64-amino-acid chain: Large ribosomal subunit protein bL35 (64 aa).

This sequence belongs to the bacterial ribosomal protein bL35 family.

In Vibrio campbellii (strain ATCC BAA-1116), this protein is Large ribosomal subunit protein bL35.